The sequence spans 220 residues: Guanylate kinase (220 aa).

The region spanning 16–195 (GLMFVLSSPS…AFESVRSILR (180 aa)) is the Guanylate kinase-like domain. Residue 23–30 (SPSGAGKT) participates in ATP binding.

The protein belongs to the guanylate kinase family.

The protein resides in the cytoplasm. The catalysed reaction is GMP + ATP = GDP + ADP. Functionally, essential for recycling GMP and indirectly, cGMP. This chain is Guanylate kinase, found in Rhodopseudomonas palustris (strain ATCC BAA-98 / CGA009).